The sequence spans 182 residues: Adenylate kinase (182 aa).

12–17 contacts ATP; sequence GAGKGT. Positions 32-61 are NMP; it reads STGDLLREEVSGGTDLGKKAELIMNKGELV. Residues Thr-33, Arg-38, 59 to 61, 85 to 88, and Gln-92 contribute to the AMP site; these read ELV and GFPR. Positions 126 to 132 are LID; it reads GRGRKDD. Arg-127 provides a ligand contact to ATP. AMP-binding residues include Arg-129 and Arg-140. Gly-168 lines the ATP pocket.

This sequence belongs to the adenylate kinase family. Monomer.

Its subcellular location is the cytoplasm. It carries out the reaction AMP + ATP = 2 ADP. It functions in the pathway purine metabolism; AMP biosynthesis via salvage pathway; AMP from ADP: step 1/1. In terms of biological role, catalyzes the reversible transfer of the terminal phosphate group between ATP and AMP. Plays an important role in cellular energy homeostasis and in adenine nucleotide metabolism. The polypeptide is Adenylate kinase (Prochlorococcus marinus (strain SARG / CCMP1375 / SS120)).